We begin with the raw amino-acid sequence, 473 residues long: MKTLYSLRRFSHVETLFNTTLTVAGRDQETTGFAWWAGNARLINLSGKLLGAHVAHAGLIVFWAGAMNLFEVAHFGPEKPMYEQGLILLPHLATLGWGVGPGGEIIDTFPYFVSGVLHLISSAVLGFGGIYHALLGPEIIEESFPLFRYVWKDRNKMTTILGIHLILLGIGAFLLVFKALYFGGVYDTWAPGGGDVRKITNLTLSPSIIFGFLLKSPFGGDGWIVSVDDLEDIIGGHVWVGSICIFGGIWHILTKPFAWARRALVWSGEAYLSYSLGALSLFGFTACCFVWFNNTAYPSEFYGPTGPEASQAQAFTFLVRDQRLGANVGAAQGPTGLGKYLMRSPTGEVIFGGETMRFWDLRAPWLEPLRGPNGLDLNRLKKDIQPWQERRSAEYMTHAPLGSLNSVGGVATEINAVNYVSPRSWLATSHFCLGFFFFVGHLWHAGRARAAAAGFEKGIDRDFEPVLSMTPLN.

Residues 1 to 14 (MKTLYSLRRFSHVE) constitute a propeptide that is removed on maturation. N-acetylthreonine is present on threonine 15. Threonine 15 carries the post-translational modification Phosphothreonine. The next 5 membrane-spanning stretches (helical) occupy residues 69–93 (LFEVAHFGPEKPMYEQGLILLPHLA), 134–155 (LLGPEIIEESFPLFRYVWKDRN), 178–200 (KALYFGGVYDTWAPGGGDVRKIT), 255–275 (KPFAWARRALVWSGEAYLSYS), and 291–312 (WFNNTAYPSEFYGPTGPEASQA). Glutamate 367 contacts [CaMn4O5] cluster. A helical transmembrane segment spans residues 447 to 471 (RARAAAAGFEKGIDRDFEPVLSMTP).

This sequence belongs to the PsbB/PsbC family. PsbC subfamily. PSII is composed of 1 copy each of membrane proteins PsbA, PsbB, PsbC, PsbD, PsbE, PsbF, PsbH, PsbI, PsbJ, PsbK, PsbL, PsbM, PsbT, PsbX, PsbY, PsbZ, Psb30/Ycf12, at least 3 peripheral proteins of the oxygen-evolving complex and a large number of cofactors. It forms dimeric complexes. It depends on Binds multiple chlorophylls and provides some of the ligands for the Ca-4Mn-5O cluster of the oxygen-evolving complex. It may also provide a ligand for a Cl- that is required for oxygen evolution. PSII binds additional chlorophylls, carotenoids and specific lipids. as a cofactor.

The protein localises to the plastid membrane. One of the components of the core complex of photosystem II (PSII). It binds chlorophyll and helps catalyze the primary light-induced photochemical processes of PSII. PSII is a light-driven water:plastoquinone oxidoreductase, using light energy to abstract electrons from H(2)O, generating O(2) and a proton gradient subsequently used for ATP formation. The sequence is that of Photosystem II CP43 reaction center protein from Cuscuta gronovii (Common dodder).